A 507-amino-acid chain; its full sequence is Phosphoenolpyruvate carboxylase (507 aa).

The segment at 1–25 is disordered; sequence MHKIDRKIPNIMGTQHPDNAGVPFF.

It belongs to the PEPCase type 2 family. Homotetramer. Requires Mg(2+) as cofactor.

It catalyses the reaction oxaloacetate + phosphate = phosphoenolpyruvate + hydrogencarbonate. In terms of biological role, catalyzes the irreversible beta-carboxylation of phosphoenolpyruvate (PEP) to form oxaloacetate (OAA), a four-carbon dicarboxylic acid source for the tricarboxylic acid cycle. The protein is Phosphoenolpyruvate carboxylase of Oenococcus oeni (strain ATCC BAA-331 / PSU-1).